Consider the following 505-residue polypeptide: ATP synthase subunit alpha, chloroplastic (505 aa).

Residue 170-177 coordinates ATP; it reads GDRQTGKT.

Belongs to the ATPase alpha/beta chains family. As to quaternary structure, F-type ATPases have 2 components, CF(1) - the catalytic core - and CF(0) - the membrane proton channel. CF(1) has five subunits: alpha(3), beta(3), gamma(1), delta(1), epsilon(1). CF(0) has four main subunits: a, b, b' and c.

The protein resides in the plastid. Its subcellular location is the chloroplast thylakoid membrane. It catalyses the reaction ATP + H2O + 4 H(+)(in) = ADP + phosphate + 5 H(+)(out). Its function is as follows. Produces ATP from ADP in the presence of a proton gradient across the membrane. The alpha chain is a regulatory subunit. This Oenothera parviflora (Small-flowered evening primrose) protein is ATP synthase subunit alpha, chloroplastic.